The sequence spans 1103 residues: Retinal guanylyl cyclase 1 (1103 aa).

Residues 1–51 (MTACARRAGGLPDPGLCGPAWWAPSLPRLPRALPRLPLLLLLLLLQPPALS) form the signal peptide. Topologically, residues 52-462 (AVFTVGVLGP…PNNICGGGLE (411 aa)) are extracellular. Asn297 carries an N-linked (GlcNAc...) asparagine glycan. The chain crosses the membrane as a helical span at residues 463–487 (PGLVFLGFLLVVGMGLAGAFLAHYV). At 488–1103 (RHRLLHMQMV…LEKARPGQFS (616 aa)) the chain is on the cytoplasmic side. In terms of domain architecture, Protein kinase spans 525–808 (QGSRSSLGAR…DHTFDLFKNI (284 aa)). The region spanning 880–1010 (TLYFSDIVGF…DTVNTASRME (131 aa)) is the Guanylate cyclase domain. Residues 1065-1103 (PIPKPPDLQPGSSNHGISLQEIPPERRRKLEKARPGQFS) form a disordered region.

This sequence belongs to the adenylyl cyclase class-4/guanylyl cyclase family. Homodimer; requires homodimerization for guanylyl cyclase activity. Interacts with RD3; promotes the exit of GUCY2D from the endoplasmic reticulum and its trafficking to the photoreceptor outer segments. Interaction with RD3 negatively regulates guanylate cyclase activity. In terms of tissue distribution, retina.

The protein resides in the photoreceptor outer segment membrane. It is found in the endoplasmic reticulum membrane. The enzyme catalyses GTP = 3',5'-cyclic GMP + diphosphate. Activated by GUCA1A when free calcium ions concentration is low, and inhibited by GUCA1A when free calcium ions concentration is high. Negatively regulated by RD3; inhibits the basal and GUCA1A-stimulated guanylate cyclase activity. In terms of biological role, catalyzes the synthesis of cyclic GMP (cGMP) in rods and cones of photoreceptors. Plays an essential role in phototransduction, by mediating cGMP replenishment. May also participate in the trafficking of membrane-asociated proteins to the photoreceptor outer segment membrane. The polypeptide is Retinal guanylyl cyclase 1 (GUCY2D) (Homo sapiens (Human)).